The chain runs to 258 residues: Type III pantothenate kinase 1 (258 aa).

An ATP-binding site is contributed by 6-13 (DMGNSHIH). 107 to 110 (GADR) provides a ligand contact to substrate. Residue aspartate 109 is the Proton acceptor of the active site. Aspartate 130 contributes to the K(+) binding site. Residue threonine 133 participates in ATP binding. Threonine 185 serves as a coordination point for substrate.

Belongs to the type III pantothenate kinase family. Homodimer. Requires NH4(+) as cofactor. K(+) is required as a cofactor.

The protein localises to the cytoplasm. It catalyses the reaction (R)-pantothenate + ATP = (R)-4'-phosphopantothenate + ADP + H(+). The protein operates within cofactor biosynthesis; coenzyme A biosynthesis; CoA from (R)-pantothenate: step 1/5. Catalyzes the phosphorylation of pantothenate (Pan), the first step in CoA biosynthesis. This Francisella tularensis subsp. tularensis (strain FSC 198) protein is Type III pantothenate kinase 1.